The following is an 80-amino-acid chain: Exodeoxyribonuclease 7 small subunit (80 aa).

Belongs to the XseB family. Heterooligomer composed of large and small subunits.

Its subcellular location is the cytoplasm. It catalyses the reaction Exonucleolytic cleavage in either 5'- to 3'- or 3'- to 5'-direction to yield nucleoside 5'-phosphates.. In terms of biological role, bidirectionally degrades single-stranded DNA into large acid-insoluble oligonucleotides, which are then degraded further into small acid-soluble oligonucleotides. This Shigella sonnei (strain Ss046) protein is Exodeoxyribonuclease 7 small subunit.